A 550-amino-acid chain; its full sequence is Zinc finger protein 382 (550 aa).

Positions 1–105 (MPLQGSVSFK…RHSRPLIFIN (105 aa)) are mediates interaction with TRIM28. 2 represses transcription regions span residues 5-46 (GSVS…FVSV) and 70-211 (IFPS…PEQP). A KRAB domain is found at 7–78 (VSFKDVTVDF…RIFPSYSYLE (72 aa)). The C2H2-type 1; degenerate zinc-finger motif lies at 212-234 (FDHNECEKSFLMKGMLFTHTRAH). 9 consecutive C2H2-type zinc fingers follow at residues 296–318 (FHCP…QRIH), 324–346 (YVCN…EKTH), 352–374 (FICI…HKTH), 380–402 (YECP…QRTH), 408–430 (YQCN…QRTH), 436–458 (YICN…QRIH), 464–486 (YICN…HRIH), 492–514 (NGCP…QKTH), and 520–542 (YECK…QKTH). The required for transcriptional repression activity; probably mediates sequence-specific DNA-binding stretch occupies residues 296–550 (FHCPYCGNNF…THKVETTGIQ (255 aa)).

The protein belongs to the krueppel C2H2-type zinc-finger protein family. As to quaternary structure, interacts with TRIM28; enhances the transcriptional repressor activity. In terms of tissue distribution, specifically expressed in heart with a weaker expression also detected in skeletal muscle.

Its subcellular location is the nucleus. In terms of biological role, functions as a sequence-specific transcriptional repressor. The polypeptide is Zinc finger protein 382 (ZNF382) (Homo sapiens (Human)).